Consider the following 124-residue polypeptide: UPF0344 protein BH2983 (124 aa).

The next 4 membrane-spanning stretches (helical) occupy residues 15–35 (GSWAILIILFLVSYFLIKAGK), 40–60 (KILHMIVRLFFVIMLITGAGM), 61–81 (LVYWQFAFLFIVKGVLAIVLI), and 102–122 (IYWIVFITCLVLVALIGYNVI).

Belongs to the UPF0344 family.

The protein localises to the cell membrane. The polypeptide is UPF0344 protein BH2983 (Halalkalibacterium halodurans (strain ATCC BAA-125 / DSM 18197 / FERM 7344 / JCM 9153 / C-125) (Bacillus halodurans)).